Reading from the N-terminus, the 1279-residue chain is Botulinum-like toxin eBoNT/J (1279 aa).

H225 is a Zn(2+) binding site. E226 is an active-site residue. Positions 229 and 269 each coordinate Zn(2+). Cysteines 424 and 438 form a disulfide. Residues 435–843 (LSSCIEILED…RLTSLPVFNL (409 aa)) form a translocation domain (TD) region. The belt; not required for channel formation stretch occupies residues 476–525 (ADTILDSTLSNYDFSKEINFTSTVPIITVEDPLETDEDVPVISEDRTVYV). The interval 860–1080 (IDIQDSEVLN…EVNRLYWKYF (221 aa)) is N-terminus of receptor binding domain (N-RBD). A C-terminus of receptor binding domain (C-RBD) region spans residues 1081-1279 (EGSYLRDVWG…IPVDEGWKED (199 aa)). Residues 1250 to 1253 (SAWY) carry the Host ganglioside-binding motif motif.

Belongs to the peptidase M27 family. As to quaternary structure, might be a disulfide-linked heterodimer of a light chain (LC) and heavy chain (HC). Zn(2+) is required as a cofactor.

It is found in the secreted. The protein resides in the host cytoplasm. It localises to the host cytosol. The protein localises to the host cell membrane. Its subcellular location is the host cytoplasmic vesicle membrane. It carries out the reaction Limited hydrolysis of proteins of the neuroexocytosis apparatus, synaptobrevins, SNAP25 or syntaxin. No detected action on small molecule substrates.. Its function is as follows. Strongly resembles a botulinum-type toxin, with the appropriate domains and residues to have proteolytic function, although its C-terminus (which binds to a eukaryotic host cell) is different enough from clostrial botulinum toxins that it might bind another cell target. Might be a precursor of a toxin that binds to an unknown eukaryotic cell receptor(s), and be taken up into the host cell via the endocytic pathway. When the pH of the putative toxin-containing endosome drops a structural rearrangement occurs so that the N-terminus of the heavy chain forms pores that allows the light chain to translocate into the cytosol. Once in the cytosol the disulfide bond linking the 2 subunits is reduced and light chain cleaves its target protein. This Enterococcus sp. (strain 3G1_DIV0629) protein is Botulinum-like toxin eBoNT/J.